The primary structure comprises 89 residues: Large ribosomal subunit protein bL27 (89 aa).

The disordered stretch occupies residues 1–22 (MAHKKAGGSSRNGRDSESKRLG).

This sequence belongs to the bacterial ribosomal protein bL27 family.

This Bartonella henselae (strain ATCC 49882 / DSM 28221 / CCUG 30454 / Houston 1) (Rochalimaea henselae) protein is Large ribosomal subunit protein bL27.